Reading from the N-terminus, the 273-residue chain is Large ribosomal subunit protein uL2 (273 aa).

The segment at 228–273 (VDHPHGGGEGKTSGGRHPVTPWGFPTKGKKTRKNKRTSKFIIKKRK) is disordered. The span at 254 to 273 (KGKKTRKNKRTSKFIIKKRK) shows a compositional bias: basic residues.

It belongs to the universal ribosomal protein uL2 family. As to quaternary structure, part of the 50S ribosomal subunit. Forms a bridge to the 30S subunit in the 70S ribosome.

One of the primary rRNA binding proteins. Required for association of the 30S and 50S subunits to form the 70S ribosome, for tRNA binding and peptide bond formation. It has been suggested to have peptidyltransferase activity; this is somewhat controversial. Makes several contacts with the 16S rRNA in the 70S ribosome. In Rickettsia bellii (strain OSU 85-389), this protein is Large ribosomal subunit protein uL2.